Here is an 89-residue protein sequence, read N- to C-terminus: Small ribosomal subunit protein uS15 (89 aa).

It belongs to the universal ribosomal protein uS15 family. In terms of assembly, part of the 30S ribosomal subunit. Forms a bridge to the 50S subunit in the 70S ribosome, contacting the 23S rRNA.

One of the primary rRNA binding proteins, it binds directly to 16S rRNA where it helps nucleate assembly of the platform of the 30S subunit by binding and bridging several RNA helices of the 16S rRNA. Its function is as follows. Forms an intersubunit bridge (bridge B4) with the 23S rRNA of the 50S subunit in the ribosome. This chain is Small ribosomal subunit protein uS15, found in Lactococcus lactis subsp. lactis (strain IL1403) (Streptococcus lactis).